Consider the following 74-residue polypeptide: Apolipoprotein C-I, acidic form (74 aa).

The signal sequence occupies residues 1–26 (MRLFLSLPVLVVVLSMVLEGPTPAQG).

It belongs to the apolipoprotein C1 family.

The protein resides in the secreted. The chain is Apolipoprotein C-I, acidic form (APOC1A) from Colobus guereza (Mantled guereza).